The sequence spans 1238 residues: Chitin synthase 4 (1238 aa).

2 disordered regions span residues 1–93 (MAEP…PERN) and 132–190 (TVSS…RRQK). Positions 14 to 34 (TRDKSHSPYRESPSRRLRDVE) are enriched in basic and acidic residues. Residue asparagine 50 is glycosylated (N-linked (GlcNAc...) asparagine). 2 stretches are compositionally biased toward polar residues: residues 71 to 80 (SNPNPMSQSD) and 133 to 142 (VSSGSTQQDT). The span at 175-190 (RKDTRNLTEEEKRRQK) shows a compositional bias: basic and acidic residues. An N-linked (GlcNAc...) asparagine glycan is attached at asparagine 180. Helical transmembrane passes span 200–220 (IWNIYCAVVTFWAPDCLLQCF) and 235–255 (VGLISIILLIAAFVGFLTFGF). 3 N-linked (GlcNAc...) asparagine glycosylation sites follow: asparagine 365, asparagine 404, and asparagine 426. The chain crosses the membrane as a helical span at residues 487–507 (VVLYVSLVFILAIVAAKFFLA). 2 disordered regions span residues 548–570 (PKITDPASTVTGSDGRTSKRGSM) and 582–606 (YAVDRRSSRPPPTTMTSQSSNAKLL). Residues 553–562 (PASTVTGSDG) are compositionally biased toward polar residues. Asparagine 617, asparagine 903, and asparagine 1030 each carry an N-linked (GlcNAc...) asparagine glycan. 3 consecutive transmembrane segments (helical) span residues 1062–1082 (IGTLVLPAAISFTFYLIILSI), 1087–1107 (VPVIPLVLLALILGLPAILIV), and 1115–1135 (YILWMGIYLLSLPIWNFVLPA).

The protein belongs to the chitin synthase family. Class IV subfamily. Post-translationally, maximal activity requires trypsin activation, suggesting a zymogenic nature.

Its subcellular location is the cell membrane. It catalyses the reaction [(1-&gt;4)-N-acetyl-beta-D-glucosaminyl](n) + UDP-N-acetyl-alpha-D-glucosamine = [(1-&gt;4)-N-acetyl-beta-D-glucosaminyl](n+1) + UDP + H(+). Its activity is regulated as follows. Activity is stimulated by Mg(2+), and is more inhibited by polyoxin D than by nikkomycin. Polymerizes chitin, a structural polymer of the cell wall and septum, by transferring the sugar moiety of UDP-GlcNAc to the non-reducing end of the growing chitin polymer. CHS4 synthesizes a large amount of chitin and appears to play a role in the process of cell separation. CHS4 is particularly well suited for functioning at the higher temperatures associated with its poorly characterized saprophic environment and with human infection. The sequence is that of Chitin synthase 4 from Exophiala dermatitidis (Black yeast-like fungus).